A 107-amino-acid chain; its full sequence is uncharacterized protein (107 aa).

A signal peptide spans 1–20 (MYIKGRLIFFFVVLVIALCS).

This is an uncharacterized protein from Listeria monocytogenes serovar 1/2a (strain ATCC BAA-679 / EGD-e).